We begin with the raw amino-acid sequence, 424 residues long: UPF0415 protein C7orf25 homolog (424 aa).

This sequence belongs to the UPF0415 family.

In Xenopus tropicalis (Western clawed frog), this protein is UPF0415 protein C7orf25 homolog.